A 318-amino-acid polypeptide reads, in one-letter code: MAEAIRSDWSVDEVEALLRLPLLDLVGRANGVHRAHHAPDDIQKASLLSIKTGGCPEDCAYCPQSAHHREVELTREKLMNPDHVVSLARRAQRAGAERFCMGAAWRQVRDGAEFDNVLAMVRGVRALGMEACVTLGMLRPHQAQRLAEAGLTAYNHNLDTSPEFYGQIIGTRTYQDRLDTLAYCRDAGIELCCGGIIGMGESLRDRAAMLQVLANFAPHPESVPINALIPIEGTPLAHRERVGIFDLVRMVATARIIMPLTRVRLSAGRSDFSAAEQALCFLAGANSVFYGDVLLTAPNAGTGADAELFAALGALETA.

The 221-residue stretch at 40–260 (DDIQKASLLS…VATARIIMPL (221 aa)) folds into the Radical SAM core domain. [4Fe-4S] cluster is bound by residues C55, C59, and C62. [2Fe-2S] cluster-binding residues include C100, C132, C192, and R264.

It belongs to the radical SAM superfamily. Biotin synthase family. In terms of assembly, homodimer. [4Fe-4S] cluster serves as cofactor. It depends on [2Fe-2S] cluster as a cofactor.

The enzyme catalyses (4R,5S)-dethiobiotin + (sulfur carrier)-SH + 2 reduced [2Fe-2S]-[ferredoxin] + 2 S-adenosyl-L-methionine = (sulfur carrier)-H + biotin + 2 5'-deoxyadenosine + 2 L-methionine + 2 oxidized [2Fe-2S]-[ferredoxin]. The protein operates within cofactor biosynthesis; biotin biosynthesis; biotin from 7,8-diaminononanoate: step 2/2. Catalyzes the conversion of dethiobiotin (DTB) to biotin by the insertion of a sulfur atom into dethiobiotin via a radical-based mechanism. This Ruegeria pomeroyi (strain ATCC 700808 / DSM 15171 / DSS-3) (Silicibacter pomeroyi) protein is Biotin synthase.